The primary structure comprises 456 residues: MTYPQNVGIKAMEIYVPPQCLDQTLFEKHQGVSAGKYTIGLGLQYMNFCTDREDVCSLALTAVSSLLRKFDIDPKSIGRLEVGTESPIDKAKSVKSVLTTLFEPHGNTSLEGIDTIHACYGGTSALFNAVNWVESRSWDGRDAIVVASDIALYKEDASRPTGGAGCVAMLIGPNAVLSLEPSLRGVYMTNTFDFYKPDMKVEFPIVNGHESIACYLGALDECHKDLLRRTEAAKKQLNGDAPKTGKKVLDLFDYMAFHTPNCKLVSKSYGRLKYNDCLNSTNAADWEGIPDELRNLSYKDSLKDKTLERALVAATKTEFKMRVEPCIAAPSLCGNMYTASLYCSLISLISNIDLASAEGKTIGLFSYGSGAASTLFGMRVTGDLTNMVQKIDLMRRLKQRNIQTPEDYEKACALRLKAYGNKSYKPLGDVSSLTPGTYYLKSIDEAYRRTYAIKGQ.

Residue Ala-34 coordinates (3S)-3-hydroxy-3-methylglutaryl-CoA. Glu-85 functions as the Proton donor/acceptor in the catalytic mechanism. (3S)-3-hydroxy-3-methylglutaryl-CoA contacts are provided by Cys-119, Thr-161, Ser-211, His-258, Lys-267, Asn-335, and Ser-369. The Acyl-thioester intermediate role is filled by Cys-119. His-258 acts as the Proton donor/acceptor in catalysis.

Belongs to the thiolase-like superfamily. HMG-CoA synthase family.

It carries out the reaction acetoacetyl-CoA + acetyl-CoA + H2O = (3S)-3-hydroxy-3-methylglutaryl-CoA + CoA + H(+). Functionally, HMG-CoA synthase; part of the gene cluster that mediates the biosynthesis of 1233A, a natural compound known as an inhibitor of HMG-CoA synthase in the mevalonate pathway and with antibacterial and antifungal activities. This enzyme condenses acetyl-CoA with acetoacetyl-CoA to form HMG-CoA, which is the substrate for HMG-CoA reductase. As part of the 1233A biosynthesis cluster, is involved in conferring self-resistance to 1233A. This Fusarium sp protein is Hydroxymethylglutaryl coenzyme A synthase.